The primary structure comprises 628 residues: Netrin-4 (628 aa).

Positions 1–19 (MGSCARLLLLWGCSAVAAG) are cleaved as a signal peptide. The region spanning 30–261 (CEKACNPRMG…AVYDFIVKGS (232 aa)) is the Laminin N-terminal domain. N-linked (GlcNAc...) asparagine glycans are attached at residues N56 and N163. 12 cysteine pairs are disulfide-bonded: C262/C271, C264/C293, C295/C304, C307/C329, C332/C341, C334/C359, C362/C371, C374/C392, C395/C413, C397/C420, C422/C431, and C434/C446. 3 Laminin EGF-like domains span residues 262–331 (CFCN…ECRT), 332–394 (CKCN…ACKA), and 395–448 (CSCH…GCRP). N353 carries N-linked (GlcNAc...) asparagine glycosylation. Residue N483 is glycosylated (N-linked (GlcNAc...) asparagine). 2 disulfide bridges follow: C506-C576 and C520-C627. The NTR domain maps to 506–627 (CECKEQVLGN…RVMHILKRDC (122 aa)).

In terms of assembly, may form a homodimer. In terms of tissue distribution, expressed in kidney, liver, heart, ovary, testis, retina, brain, olfactory bulb, and widely expressed in embryo.

It localises to the secreted. The protein localises to the extracellular space. The protein resides in the extracellular matrix. It is found in the basement membrane. May play an important role in neural, kidney and vascular development. Promotes neurite elongation from olfactory bulb explants. This is Netrin-4 (Ntn4) from Mus musculus (Mouse).